Here is a 120-residue protein sequence, read N- to C-terminus: Fluoride-specific ion channel FluC 1 (120 aa).

2 helical membrane passes run 3–23 and 42–62; these read ALLTAVGAAFGALLRYCLNCA and LGCLLAGALAALPLPAAVAAL. Gly-69 and Thr-72 together coordinate Na(+). Residues 99 to 119 form a helical membrane-spanning segment; it reads ANLAAGVGAAVLGMAAVGWFL.

It belongs to the fluoride channel Fluc/FEX (TC 1.A.43) family.

The protein resides in the cell membrane. The enzyme catalyses fluoride(in) = fluoride(out). Its activity is regulated as follows. Na(+) is not transported, but it plays an essential structural role and its presence is essential for fluoride channel function. In terms of biological role, fluoride-specific ion channel. Important for reducing fluoride concentration in the cell, thus reducing its toxicity. The chain is Fluoride-specific ion channel FluC 1 from Thermobifida fusca (strain YX).